Here is a 442-residue protein sequence, read N- to C-terminus: Serine--tRNA ligase (442 aa).

244-246 contacts L-serine; that stretch reads TAE. 275–277 contributes to the ATP binding site; that stretch reads RAE. Glutamate 298 is a binding site for L-serine. 365–368 is a binding site for ATP; it reads EISS. Residue serine 400 coordinates L-serine.

The protein belongs to the class-II aminoacyl-tRNA synthetase family. Type-1 seryl-tRNA synthetase subfamily. In terms of assembly, homodimer. The tRNA molecule binds across the dimer.

It localises to the cytoplasm. It carries out the reaction tRNA(Ser) + L-serine + ATP = L-seryl-tRNA(Ser) + AMP + diphosphate + H(+). It catalyses the reaction tRNA(Sec) + L-serine + ATP = L-seryl-tRNA(Sec) + AMP + diphosphate + H(+). Its pathway is aminoacyl-tRNA biosynthesis; selenocysteinyl-tRNA(Sec) biosynthesis; L-seryl-tRNA(Sec) from L-serine and tRNA(Sec): step 1/1. In terms of biological role, catalyzes the attachment of serine to tRNA(Ser). Is also able to aminoacylate tRNA(Sec) with serine, to form the misacylated tRNA L-seryl-tRNA(Sec), which will be further converted into selenocysteinyl-tRNA(Sec). The chain is Serine--tRNA ligase from Bradyrhizobium sp. (strain ORS 278).